Reading from the N-terminus, the 415-residue chain is Serine hydroxymethyltransferase 1 (415 aa).

(6S)-5,6,7,8-tetrahydrofolate contacts are provided by residues Leu-122 and 126–128; that span reads GHL. Lys-230 bears the N6-(pyridoxal phosphate)lysine mark.

This sequence belongs to the SHMT family. In terms of assembly, homodimer. Requires pyridoxal 5'-phosphate as cofactor.

Its subcellular location is the cytoplasm. It carries out the reaction (6R)-5,10-methylene-5,6,7,8-tetrahydrofolate + glycine + H2O = (6S)-5,6,7,8-tetrahydrofolate + L-serine. It functions in the pathway one-carbon metabolism; tetrahydrofolate interconversion. It participates in amino-acid biosynthesis; glycine biosynthesis; glycine from L-serine: step 1/1. In terms of biological role, catalyzes the reversible interconversion of serine and glycine with tetrahydrofolate (THF) serving as the one-carbon carrier. This reaction serves as the major source of one-carbon groups required for the biosynthesis of purines, thymidylate, methionine, and other important biomolecules. Also exhibits THF-independent aldolase activity toward beta-hydroxyamino acids, producing glycine and aldehydes, via a retro-aldol mechanism. This Burkholderia mallei (strain ATCC 23344) protein is Serine hydroxymethyltransferase 1.